Reading from the N-terminus, the 302-residue chain is RNA polymerase sigma factor RpoH (302 aa).

Residues L57–S126 form a sigma-70 factor domain-2 region. Positions E81 to S84 match the Interaction with polymerase core subunit RpoC motif. The segment at A235–K286 is sigma-70 factor domain-4. Residues L259–V278 constitute a DNA-binding region (H-T-H motif).

Belongs to the sigma-70 factor family. RpoH subfamily. Interacts with the RNA polymerase core enzyme.

The protein resides in the cytoplasm. Sigma factors are initiation factors that promote the attachment of RNA polymerase to specific initiation sites and are then released. This sigma factor is involved in regulation of expression of heat shock genes. This Zymomonas mobilis subsp. mobilis (strain ATCC 31821 / ZM4 / CP4) protein is RNA polymerase sigma factor RpoH.